The chain runs to 431 residues: Probable zinc metalloprotease Lema_P086240 (431 aa).

The N-linked (GlcNAc...) asparagine glycan is linked to Asn-46. Zn(2+) is bound by residues His-117, Asp-137, and Glu-170. Residue Asn-185 is glycosylated (N-linked (GlcNAc...) asparagine). Asp-197 lines the Zn(2+) pocket. N-linked (GlcNAc...) asparagine glycosylation is found at Asn-258, Asn-310, Asn-349, Asn-359, and Asn-369. The Fibronectin type-III domain occupies 344-431; sequence PGMPRNVTID…KSPAVYPFPG (88 aa).

The protein belongs to the peptidase M28 family. M28B subfamily. It depends on Zn(2+) as a cofactor.

Its subcellular location is the secreted. This Leptosphaeria maculans (strain JN3 / isolate v23.1.3 / race Av1-4-5-6-7-8) (Blackleg fungus) protein is Probable zinc metalloprotease Lema_P086240.